Reading from the N-terminus, the 287-residue chain is Mitochondrial dicarboxylate carrier (287 aa).

Solcar repeat units follow at residues 8 to 88 (SRWY…VRDR), 101 to 188 (EKVL…AKQL), and 197 to 280 (DNIF…LRKN). 6 helical membrane-spanning segments follow: residues 10-30 (WYFG…LDLL), 63-82 (GLSA…FAIY), 103-123 (VLLG…ADLV), 163-182 (GATM…LSCY), 203-223 (FVAS…LDVL), and 255-275 (GLVP…VFLE).

The protein belongs to the mitochondrial carrier (TC 2.A.29) family. Present in high amounts in liver and kidney, and at lower levels in all the other tissues analyzed.

The protein resides in the mitochondrion inner membrane. It catalyses the reaction (S)-malate(in) + phosphate(out) = (S)-malate(out) + phosphate(in). The catalysed reaction is malonate(out) + (S)-malate(in) = malonate(in) + (S)-malate(out). It carries out the reaction (S)-malate(in) + succinate(out) = (S)-malate(out) + succinate(in). The enzyme catalyses (S)-malate(in) + sulfate(out) = (S)-malate(out) + sulfate(in). It catalyses the reaction malonate(out) + phosphate(in) = malonate(in) + phosphate(out). The catalysed reaction is succinate(out) + phosphate(in) = succinate(in) + phosphate(out). It carries out the reaction sulfate(out) + phosphate(in) = sulfate(in) + phosphate(out). The enzyme catalyses malonate(out) + succinate(in) = malonate(in) + succinate(out). In terms of biological role, catalyzes the electroneutral exchange or flux of physiologically important metabolites such as dicarboxylates (malonate, malate, succinate), inorganic sulfur-containing anions, and phosphate, across mitochondrial inner membrane. Plays an important role in gluconeogenesis, fatty acid metabolism, urea synthesis, and sulfur metabolism, particularly in liver, by supplying the substrates for the different metabolic processes. Regulates fatty acid release from adipocytes, and contributes to systemic insulin sensitivity. The protein is Mitochondrial dicarboxylate carrier (SLC25A10) of Homo sapiens (Human).